Here is a 98-residue protein sequence, read N- to C-terminus: MTKSELIERIVTHQGLLSSKDVELAIKTMLEQMSQCLATGDRIEIRGFGSFSLHYRAPRVGRNPKTGQSVSLDGKFVPHFKPGKELRDRVNEDEEEGF.

It belongs to the bacterial histone-like protein family. In terms of assembly, heterodimer of an alpha and a beta chain.

Its function is as follows. This protein is one of the two subunits of integration host factor, a specific DNA-binding protein that functions in genetic recombination as well as in transcriptional and translational control. This chain is Integration host factor subunit beta, found in Pseudomonas syringae pv. tomato (strain ATCC BAA-871 / DC3000).